Reading from the N-terminus, the 427-residue chain is 3-phosphoshikimate 1-carboxyvinyltransferase (427 aa).

3-phosphoshikimate-binding residues include Lys-22, Ser-23, and Arg-27. A phosphoenolpyruvate-binding site is contributed by Lys-22. Residues Gly-93 and Arg-122 each contribute to the phosphoenolpyruvate site. 3-phosphoshikimate contacts are provided by Ser-167, Gln-169, Asp-315, and Lys-342. Gln-169 is a phosphoenolpyruvate binding site. Asp-315 functions as the Proton acceptor in the catalytic mechanism. Phosphoenolpyruvate contacts are provided by Arg-346 and Arg-387.

The protein belongs to the EPSP synthase family. As to quaternary structure, monomer.

The protein resides in the cytoplasm. It carries out the reaction 3-phosphoshikimate + phosphoenolpyruvate = 5-O-(1-carboxyvinyl)-3-phosphoshikimate + phosphate. The protein operates within metabolic intermediate biosynthesis; chorismate biosynthesis; chorismate from D-erythrose 4-phosphate and phosphoenolpyruvate: step 6/7. In terms of biological role, catalyzes the transfer of the enolpyruvyl moiety of phosphoenolpyruvate (PEP) to the 5-hydroxyl of shikimate-3-phosphate (S3P) to produce enolpyruvyl shikimate-3-phosphate and inorganic phosphate. This chain is 3-phosphoshikimate 1-carboxyvinyltransferase, found in Thermus thermophilus (strain ATCC 27634 / DSM 579 / HB8).